A 286-amino-acid chain; its full sequence is Flagellin FlaB2 (286 aa).

It belongs to the bacterial flagellin family. In terms of assembly, the flagellum consists of an outer layer composed of repeating units of FlaA around a core that contains several antigenically related polypeptides. Interacts with FliW; a synthetic peptide of FlaB1 (residues 229-247) partially blocks binding of this protein to FliW.

It is found in the periplasmic flagellum. The protein resides in the periplasm. In terms of biological role, component of the core of the flagella. The polypeptide is Flagellin FlaB2 (Treponema pallidum (strain Nichols)).